The sequence spans 349 residues: Protein O-mannose kinase (349 aa).

Over 1–19 the chain is Cytoplasmic; that stretch reads MGQQHGTRNGLTHRELPRG. A helical; Signal-anchor for type II membrane protein membrane pass occupies residues 20–42; that stretch reads VGLLLAMALMNVALYLCLDQLFI. At 43-349 the chain is on the lumenal side; it reads SPGRSTADSR…TVMSQTKEML (307 aa). Asparagine 66, asparagine 164, and asparagine 219 each carry an N-linked (GlcNAc...) asparagine glycan. The region spanning 80-349 is the Protein kinase domain; it reads VRQLKRVGEG…TVMSQTKEML (270 aa).

It belongs to the protein kinase superfamily. Ser/Thr protein kinase family. STKL subfamily.

The protein resides in the endoplasmic reticulum membrane. It carries out the reaction 3-O-[beta-D-GalNAc-(1-&gt;3)-beta-D-GlcNAc-(1-&gt;4)-alpha-D-Man]-L-Thr-[protein] + ATP = 3-O-[beta-D-GalNAc-(1-&gt;3)-beta-D-GlcNAc-(1-&gt;4)-(O-6-P-alpha-D-Man)]-Thr-[protein] + ADP + H(+). Its function is as follows. Protein O-mannose kinase that specifically mediates phosphorylation at the 6-position of an O-mannose of the trisaccharide (N-acetylgalactosamine (GalNAc)-beta-1,3-N-acetylglucosamine (GlcNAc)-beta-1,4-mannose) to generate phosphorylated O-mannosyl trisaccharide (N-acetylgalactosamine-beta-1,3-N-acetylglucosamine-beta-1,4-(phosphate-6-)mannose). Phosphorylated O-mannosyl trisaccharide is a carbohydrate structure present in alpha-dystroglycan (DAG1), which is required for binding laminin G-like domain-containing extracellular proteins with high affinity. Only shows kinase activity when the GalNAc-beta-3-GlcNAc-beta-terminus is linked to the 4-position of O-mannose, suggesting that this disaccharide serves as the substrate recognition motif. This is Protein O-mannose kinase (Pomk) from Mus musculus (Mouse).